Consider the following 147-residue polypeptide: Large ribosomal subunit protein uL16 (147 aa).

It belongs to the universal ribosomal protein uL16 family. Part of the 50S ribosomal subunit.

In terms of biological role, binds 23S rRNA and is also seen to make contacts with the A and possibly P site tRNAs. The chain is Large ribosomal subunit protein uL16 from Clostridium tetani (strain Massachusetts / E88).